Consider the following 392-residue polypeptide: MARSDYLFTSESVSEGHPDKVCDRISDTVVDAYLAEMPEARLGVETLATTNRIVIAGEVRGPDSVTFARLEELTRAAVKDIGYEQDGFHWKNADVAIYLHAQSADIAQGVDASGNKDEGAGDQGIMFGYATDETPALMPAPIYYAHKILKDLADARKGRVGEAAKLGPDAKSQVTVRYEGGRPVEATQIVLSTQHLDESLDSQGVRAIVEPYIRAALPGSWVTDRTVWHVNPTGKFVIGGPDGDCGLTGRKIIVDTYGGAAPHGGGAFSGKDPTKVDRSAAYAARYLAKNVVAAGLSRRATIQLAYAIGVAKPLSIYVDLHGTGRVEEAKLEKVLGEILDLSPRGIRTHLGLNKPIYARTSAYGHFGREPDRDGGFSWEKTDLVATLKSALA.

His17 is a binding site for ATP. Asp19 lines the Mg(2+) pocket. Glu45 lines the K(+) pocket. L-methionine is bound by residues Glu58 and Gln102. The tract at residues 102-112 (QSADIAQGVDA) is flexible loop. ATP-binding positions include 169-171 (DAK), 235-236 (KF), Asp244, 250-251 (RK), Ala267, and Lys271. Residue Asp244 coordinates L-methionine. Lys275 lines the L-methionine pocket.

Belongs to the AdoMet synthase family. As to quaternary structure, homotetramer; dimer of dimers. It depends on Mg(2+) as a cofactor. K(+) is required as a cofactor.

It localises to the cytoplasm. It carries out the reaction L-methionine + ATP + H2O = S-adenosyl-L-methionine + phosphate + diphosphate. It functions in the pathway amino-acid biosynthesis; S-adenosyl-L-methionine biosynthesis; S-adenosyl-L-methionine from L-methionine: step 1/1. In terms of biological role, catalyzes the formation of S-adenosylmethionine (AdoMet) from methionine and ATP. The overall synthetic reaction is composed of two sequential steps, AdoMet formation and the subsequent tripolyphosphate hydrolysis which occurs prior to release of AdoMet from the enzyme. The chain is S-adenosylmethionine synthase from Methylobacterium sp. (strain 4-46).